Reading from the N-terminus, the 253-residue chain is 5'-nucleotidase SurE (253 aa).

A divalent metal cation-binding residues include Asp-8, Asp-9, Ser-40, and Asn-93.

It belongs to the SurE nucleotidase family. A divalent metal cation serves as cofactor.

The protein localises to the cytoplasm. It catalyses the reaction a ribonucleoside 5'-phosphate + H2O = a ribonucleoside + phosphate. Nucleotidase that shows phosphatase activity on nucleoside 5'-monophosphates. In Methylobacterium nodulans (strain LMG 21967 / CNCM I-2342 / ORS 2060), this protein is 5'-nucleotidase SurE.